We begin with the raw amino-acid sequence, 295 residues long: Putative ribose uptake protein RbsU (295 aa).

Helical transmembrane passes span 5-24 (ALLI…TIAS), 34-56 (ILGT…GLAF), 63-80 (FFSI…IITF), 95-114 (TTAF…LGNW), 121-139 (LLGA…MTVW), 154-171 (AVLL…YSAA), 183-205 (FLPQ…TIKG), 220-237 (IFSG…LISA), 244-266 (LATG…IWFL), and 276-293 (TVTI…TITV).

This sequence belongs to the GRP transporter (TC 2.A.7.5) family.

It localises to the cell membrane. Could be involved in the uptake of ribose. In Enterococcus faecalis (strain ATCC 700802 / V583), this protein is Putative ribose uptake protein RbsU (rbsU).